The chain runs to 170 residues: Protein BofC (170 aa).

An N-terminal signal peptide occupies residues 1–30 (MKRFSTAYLLLGILCSAAVFLIGAPSRALG).

In terms of assembly, monomer.

It localises to the forespore intermembrane space. Functionally, inhibits the SpoIVB zymogen from undergoing autocatalytic activation by an unknown mechanism, and in this way plays a role in the sigma-K checkpoint of sporulation. The chain is Protein BofC (bofC) from Bacillus subtilis (strain 168).